Here is a 428-residue protein sequence, read N- to C-terminus: Tyrosine--tRNA ligase (428 aa).

An L-tyrosine-binding site is contributed by Tyr41. Residues 46–55 (PTADSLHLGH) carry the 'HIGH' region motif. L-tyrosine contacts are provided by Tyr179 and Gln183. The 'KMSKS' region motif lies at 239-243 (KFGKT). Residue Lys242 participates in ATP binding. The S4 RNA-binding domain occupies 361–418 (TDLMQALVDAELQPSRGQARKTIASNAVTINGEKQSDPEYIFNDEDRLFGRYTLLRRG).

It belongs to the class-I aminoacyl-tRNA synthetase family. TyrS type 1 subfamily. In terms of assembly, homodimer.

The protein localises to the cytoplasm. The enzyme catalyses tRNA(Tyr) + L-tyrosine + ATP = L-tyrosyl-tRNA(Tyr) + AMP + diphosphate + H(+). Its function is as follows. Catalyzes the attachment of tyrosine to tRNA(Tyr) in a two-step reaction: tyrosine is first activated by ATP to form Tyr-AMP and then transferred to the acceptor end of tRNA(Tyr). The polypeptide is Tyrosine--tRNA ligase (Salmonella arizonae (strain ATCC BAA-731 / CDC346-86 / RSK2980)).